The sequence spans 339 residues: Photosystem II assembly lipoprotein Ycf48 (339 aa).

The first 23 residues, 1–23 (MNRLIKFSFNLILIFVLGLGLSG), serve as a signal peptide directing secretion. Residue Cys-24 is the site of N-palmitoyl cysteine attachment. A lipid anchor (S-diacylglycerol cysteine) is attached at Cys-24.

This sequence belongs to the Ycf48 family. Part of early PSII assembly complexes which includes D1 (psbA) and PsbI; not found in mature PSII. Binds to the lumenal side of PSII complexes. Interacts with YidC.

It localises to the cellular thylakoid membrane. In terms of biological role, a factor required for optimal assembly of photosystem II (PSII), acting in the early stages of PSII assembly. Also plays a role in replacement of photodamaged D1 (psbA). Assists YidC in synthesis of chlorophyll-binding proteins. The chain is Photosystem II assembly lipoprotein Ycf48 from Prochlorococcus marinus (strain SARG / CCMP1375 / SS120).